Here is a 143-residue protein sequence, read N- to C-terminus: Transcriptional regulator MraZ (143 aa).

SpoVT-AbrB domains are found at residues 5–47 and 76–119; these read EYQH…PMSE and ATEC…SKEI.

Belongs to the MraZ family. Forms oligomers.

It is found in the cytoplasm. Its subcellular location is the nucleoid. This chain is Transcriptional regulator MraZ, found in Bacillus licheniformis (strain ATCC 14580 / DSM 13 / JCM 2505 / CCUG 7422 / NBRC 12200 / NCIMB 9375 / NCTC 10341 / NRRL NRS-1264 / Gibson 46).